A 208-amino-acid chain; its full sequence is ATP-dependent Clp protease proteolytic subunit (208 aa).

The active-site Nucleophile is Ser-105. Residue His-130 is part of the active site.

The protein belongs to the peptidase S14 family. In terms of assembly, fourteen ClpP subunits assemble into 2 heptameric rings which stack back to back to give a disk-like structure with a central cavity, resembling the structure of eukaryotic proteasomes.

The protein localises to the cytoplasm. The catalysed reaction is Hydrolysis of proteins to small peptides in the presence of ATP and magnesium. alpha-casein is the usual test substrate. In the absence of ATP, only oligopeptides shorter than five residues are hydrolyzed (such as succinyl-Leu-Tyr-|-NHMec, and Leu-Tyr-Leu-|-Tyr-Trp, in which cleavage of the -Tyr-|-Leu- and -Tyr-|-Trp bonds also occurs).. Its function is as follows. Cleaves peptides in various proteins in a process that requires ATP hydrolysis. Has a chymotrypsin-like activity. Plays a major role in the degradation of misfolded proteins. This is ATP-dependent Clp protease proteolytic subunit from Xanthomonas campestris pv. campestris (strain 8004).